We begin with the raw amino-acid sequence, 525 residues long: tRNA-2-methylthio-N(6)-dimethylallyladenosine synthase (525 aa).

The MTTase N-terminal domain occupies 14–130; sequence RTYQVRTYGC…LPTLLERARH (117 aa). [4Fe-4S] cluster contacts are provided by Cys23, Cys59, Cys93, Cys167, Cys171, and Cys174. Positions 153-400 constitute a Radical SAM core domain; it reads RESAYAGWVS…IELQERISLE (248 aa). The region spanning 403–482 is the TRAM domain; it reads QAQVGRTLEL…PHHLIADGAL (80 aa).

It belongs to the methylthiotransferase family. MiaB subfamily. As to quaternary structure, monomer. It depends on [4Fe-4S] cluster as a cofactor.

It localises to the cytoplasm. It catalyses the reaction N(6)-dimethylallyladenosine(37) in tRNA + (sulfur carrier)-SH + AH2 + 2 S-adenosyl-L-methionine = 2-methylsulfanyl-N(6)-dimethylallyladenosine(37) in tRNA + (sulfur carrier)-H + 5'-deoxyadenosine + L-methionine + A + S-adenosyl-L-homocysteine + 2 H(+). Catalyzes the methylthiolation of N6-(dimethylallyl)adenosine (i(6)A), leading to the formation of 2-methylthio-N6-(dimethylallyl)adenosine (ms(2)i(6)A) at position 37 in tRNAs that read codons beginning with uridine. This Mycobacterium sp. (strain MCS) protein is tRNA-2-methylthio-N(6)-dimethylallyladenosine synthase.